Consider the following 752-residue polypeptide: Complement C2 (752 aa).

An N-terminal signal peptide occupies residues 1–20; the sequence is MGPLMVLFCLLFLYPGLADS. 3 Sushi domains span residues 22–86, 87–146, and 149–206; these read PSCP…VCKP, VRCP…VCDN, and GHCP…ICRQ. Disulfide bonds link C24/C64, C51/C84, C89/C131, C117/C144, C151/C191, and C177/C204. The N-linked (GlcNAc...) asparagine glycan is linked to N29. N112 carries an N-linked (GlcNAc...) asparagine glycan. One can recognise a VWFA domain in the interval 254–452; that stretch reads NLYLLLDCSQ…KALHQVFEHM (199 aa). An MIDAS-like motif motif is present at residues 260–264; it reads DCSQS. S262 and S264 together coordinate Mg(2+). Mn(2+)-binding residues include S262 and S264. N-linked (GlcNAc...) asparagine glycans are attached at residues N290 and N333. T337 contributes to the Mg(2+) binding site. T337 is a binding site for Mn(2+). Disulfide bonds link C463–C581, C492–C508, and C584–C600. Positions 464-744 constitute a Peptidase S1 domain; it reads GVGNMSANAS…MQPWLRQHLG (281 aa). 2 N-linked (GlcNAc...) asparagine glycosylation sites follow: N467 and N471. Catalysis depends on charge relay system residues H507 and D561. N621 is a glycosylation site (N-linked (GlcNAc...) asparagine). Disulfide bonds link C638/C665 and C675/C705. An N-linked (GlcNAc...) (complex) asparagine glycan is attached at N651. The active-site Charge relay system is the S679.

This sequence belongs to the peptidase S1 family. As to quaternary structure, serine protease component of the C3 convertase, also named C4bC2b, composed of the serine protease complement C2b and complement C4b. Serine protease component of the C5 convertase, also named C4bC2bC3b, composed of the serine protease complement C2b, complement C3b, as well as complement C4b. In terms of assembly, (Microbial infection) Interacts with Schistosoma haematobium TOR (via N-terminal extracellular domain). This results in inhibition of the classical and lectin pathway of complement activation, probably due to interference with binding of C2a to C4b such that C3 convertase cannot be formed. This infers resistance to complement-mediated cell lysis, allowing parasite survival and infection. It depends on Mg(2+) as a cofactor. Mn(2+) is required as a cofactor. In terms of processing, cleaved and activated by different proteases depending on the complement pathway to generate complement C2a and serine protease complement C2b chains. Cleaved and activated by C1S following activation by the classical complement system. Cleaved and activated by MASP2 following activation by the lectin complement system. Cleaved and activated by GZMK following activation by the GZMK complement system.

The protein localises to the secreted. The protein resides in the cell surface. The catalysed reaction is Selective cleavage of Arg-|-Ser bond in complement component C3 alpha-chain to form C3a and C3b, and Arg-|-Xaa bond in complement component C5 alpha-chain to form C5a and C5b.. Its function is as follows. Precursor of the catalytic component of the C3 and C5 convertase complexes, which are part of the complement pathway, a cascade of proteins that leads to phagocytosis and breakdown of pathogens and signaling that strengthens the adaptive immune system. Component C2 is part of the classical, lectin and GZMK complement systems. Functionally, catalytic component of the complement C3 and C5 convertase complexes. Following complement activation, recruited to the surface of pathogens by complement C4b opsonin to form the C3 convertase, or C3b and C4b opsonins to form the C5 convertase. As part of the C3 convertase, cleaves and activate C3 into C3a anaphylatoxin and C3b opsonin, the next components of the complement pathways. As part of the C5 convertase, cleaves and activate C5 into C5a anaphylatoxin and C5b component of the membrane attack complex. The chain is Complement C2 from Homo sapiens (Human).